A 344-amino-acid chain; its full sequence is Dihydroorotase (344 aa).

The Zn(2+) site is built by histidine 14 and histidine 16. Substrate contacts are provided by residues 16 to 18 (HFR) and asparagine 42. Residues lysine 100, histidine 137, and histidine 175 each coordinate Zn(2+). The residue at position 100 (lysine 100) is an N6-carboxylysine. Substrate is bound at residue histidine 137. Position 220 (leucine 220) interacts with substrate. Residue aspartate 248 participates in Zn(2+) binding. Aspartate 248 is a catalytic residue. Positions 252 and 264 each coordinate substrate.

It belongs to the metallo-dependent hydrolases superfamily. DHOase family. Class II DHOase subfamily. Homodimer. It depends on Zn(2+) as a cofactor.

It carries out the reaction (S)-dihydroorotate + H2O = N-carbamoyl-L-aspartate + H(+). It functions in the pathway pyrimidine metabolism; UMP biosynthesis via de novo pathway; (S)-dihydroorotate from bicarbonate: step 3/3. In terms of biological role, catalyzes the reversible cyclization of carbamoyl aspartate to dihydroorotate. In Alcanivorax borkumensis (strain ATCC 700651 / DSM 11573 / NCIMB 13689 / SK2), this protein is Dihydroorotase.